The chain runs to 374 residues: F(420)H(2) dehydrogenase subunit D (374 aa).

It belongs to the complex I 49 kDa subunit family. As to quaternary structure, the FPO complex is composed of at least 13 different subunits.

The protein localises to the cell inner membrane. It carries out the reaction methanophenazine + reduced coenzyme F420-(gamma-L-Glu)(n) = dihydromethanophenazine + oxidized coenzyme F420-(gamma-L-Glu)(n) + H(+). Component of the F(420)H(2) dehydrogenase (FPO complex) which is part of the energy-conserving F(420)H(2):heterodisulfide oxidoreductase system. The membrane-bound electron transfer system of the complex plays an important role in the metabolism of methylotrophic methanogens when the organisms grow on methanol or methylamines. Catalyzes the oxidation of methanophenazine to dihydromethanophenazine. It shuttles electrons from F(420)H(2), via FAD and iron-sulfur (Fe-S) centers, to methanophenazine (an electron carrier in the membrane). It couples the redox reaction to proton translocation (for every two electrons transferred, two hydrogen ions are translocated across the cytoplasmic membrane), and thus conserves the redox energy in a proton gradient. It also catalyzes the oxidation of F(420)H(2) with quinones such as 2,3-dimethyl-1,4-naphthoquinone, 2-methyl-1,4-naphthoquinone and tetramethyl-p-benzoquinone. This chain is F(420)H(2) dehydrogenase subunit D (fpoD), found in Methanosarcina mazei (strain ATCC BAA-159 / DSM 3647 / Goe1 / Go1 / JCM 11833 / OCM 88) (Methanosarcina frisia).